A 318-amino-acid polypeptide reads, in one-letter code: tRNA-cytidine(32) 2-sulfurtransferase (318 aa).

A PP-loop motif motif is present at residues 52 to 57 (SGGKDS). The [4Fe-4S] cluster site is built by Cys127, Cys130, and Cys218.

This sequence belongs to the TtcA family. As to quaternary structure, homodimer. Requires Mg(2+) as cofactor. [4Fe-4S] cluster is required as a cofactor.

The protein localises to the cytoplasm. It carries out the reaction cytidine(32) in tRNA + S-sulfanyl-L-cysteinyl-[cysteine desulfurase] + AH2 + ATP = 2-thiocytidine(32) in tRNA + L-cysteinyl-[cysteine desulfurase] + A + AMP + diphosphate + H(+). It participates in tRNA modification. In terms of biological role, catalyzes the ATP-dependent 2-thiolation of cytidine in position 32 of tRNA, to form 2-thiocytidine (s(2)C32). The sulfur atoms are provided by the cysteine/cysteine desulfurase (IscS) system. In Actinobacillus pleuropneumoniae serotype 7 (strain AP76), this protein is tRNA-cytidine(32) 2-sulfurtransferase.